Consider the following 175-residue polypeptide: Ribosome maturation factor RimM (175 aa).

Residues 98–172 enclose the PRC barrel domain; that stretch reads DGEFHVRDLQ…WLLITPPKGL (75 aa).

This sequence belongs to the RimM family. As to quaternary structure, binds ribosomal protein uS19.

Its subcellular location is the cytoplasm. Its function is as follows. An accessory protein needed during the final step in the assembly of 30S ribosomal subunit, possibly for assembly of the head region. Essential for efficient processing of 16S rRNA. May be needed both before and after RbfA during the maturation of 16S rRNA. It has affinity for free ribosomal 30S subunits but not for 70S ribosomes. This is Ribosome maturation factor RimM from Synechococcus sp. (strain RCC307).